Here is a 343-residue protein sequence, read N- to C-terminus: Protein-glutamate methylesterase/protein-glutamine glutaminase 2 (343 aa).

Residues 5–122 form the Response regulatory domain; the sequence is KVLVVDDSAI…SVGDMSGQLV (118 aa). D56 is modified (4-aspartylphosphate). One can recognise a CheB-type methylesterase domain in the interval 154-343; it reads AETSNKVIAI…SIADEIVRMV (190 aa). Active-site residues include S166, H192, and D288.

It belongs to the CheB family. Phosphorylated by CheA. Phosphorylation of the N-terminal regulatory domain activates the methylesterase activity.

Its subcellular location is the cytoplasm. It catalyses the reaction [protein]-L-glutamate 5-O-methyl ester + H2O = L-glutamyl-[protein] + methanol + H(+). The catalysed reaction is L-glutaminyl-[protein] + H2O = L-glutamyl-[protein] + NH4(+). Its function is as follows. Involved in chemotaxis. Part of a chemotaxis signal transduction system that modulates chemotaxis in response to various stimuli. Catalyzes the demethylation of specific methylglutamate residues introduced into the chemoreceptors (methyl-accepting chemotaxis proteins or MCP) by CheR. Also mediates the irreversible deamidation of specific glutamine residues to glutamic acid. In Syntrophus aciditrophicus (strain SB), this protein is Protein-glutamate methylesterase/protein-glutamine glutaminase 2.